The following is a 315-amino-acid chain: Lipoyl synthase (315 aa).

The [4Fe-4S] cluster site is built by Cys-62, Cys-67, Cys-73, Cys-88, Cys-92, Cys-95, and Ser-302. The Radical SAM core domain occupies 74–291 (FNHGAATFMI…KKIALKLGFS (218 aa)).

It belongs to the radical SAM superfamily. Lipoyl synthase family. Requires [4Fe-4S] cluster as cofactor.

It is found in the cytoplasm. It catalyses the reaction [[Fe-S] cluster scaffold protein carrying a second [4Fe-4S](2+) cluster] + N(6)-octanoyl-L-lysyl-[protein] + 2 oxidized [2Fe-2S]-[ferredoxin] + 2 S-adenosyl-L-methionine + 4 H(+) = [[Fe-S] cluster scaffold protein] + N(6)-[(R)-dihydrolipoyl]-L-lysyl-[protein] + 4 Fe(3+) + 2 hydrogen sulfide + 2 5'-deoxyadenosine + 2 L-methionine + 2 reduced [2Fe-2S]-[ferredoxin]. It functions in the pathway protein modification; protein lipoylation via endogenous pathway; protein N(6)-(lipoyl)lysine from octanoyl-[acyl-carrier-protein]: step 2/2. Catalyzes the radical-mediated insertion of two sulfur atoms into the C-6 and C-8 positions of the octanoyl moiety bound to the lipoyl domains of lipoate-dependent enzymes, thereby converting the octanoylated domains into lipoylated derivatives. This Ruthia magnifica subsp. Calyptogena magnifica protein is Lipoyl synthase.